A 435-amino-acid chain; its full sequence is Temperature-sensitive sn-2 acyl-lipid omega-3 desaturase (ferredoxin), chloroplastic (435 aa).

Residues 1 to 42 (MASSVLSECGFRPLPRFYPKHTTSFASNPKPTFKFNPPLKPP) constitute a chloroplast transit peptide. The next 2 membrane-spanning stretches (helical) occupy residues 111–131 (MSYV…AAYF) and 134–154 (WLLW…LFVL). A Histidine box-1 motif is present at residues 156 to 160 (HDCGH). A Histidine box-2 motif is present at residues 192-196 (HRTHH). 2 helical membrane-spanning segments follow: residues 268–290 (VLTS…FVMG) and 297–319 (LYGI…HHHG). The Histidine box-3 signature appears at 359 to 363 (HVIHH).

It belongs to the fatty acid desaturase type 1 family.

It is found in the plastid. Its subcellular location is the chloroplast membrane. The catalysed reaction is a (7Z,10Z)-hexadecadienoyl-containing glycerolipid + 2 reduced [2Fe-2S]-[ferredoxin] + O2 + 2 H(+) = a (7Z,10Z,13Z)-hexadecatrienoyl-containing glycerolipid + 2 oxidized [2Fe-2S]-[ferredoxin] + 2 H2O. The enzyme catalyses a (9Z,12Z)-octadecadienoyl-containing glycerolipid + 2 reduced [2Fe-2S]-[ferredoxin] + O2 + 2 H(+) = (9Z,12Z,15Z)-octadecatrienoyl-containing glycerolipid + 2 oxidized [2Fe-2S]-[ferredoxin] + 2 H2O. Its pathway is lipid metabolism; polyunsaturated fatty acid biosynthesis. Chloroplast omega-3 fatty acid desaturase introduces the third double bond in the biosynthesis of 16:3 and 18:3 fatty acids, important constituents of plant membranes. It is thought to use ferredoxin as an electron donor and to act on fatty acids esterified to galactolipids, sulfolipids and phosphatidylglycerol. This Arabidopsis thaliana (Mouse-ear cress) protein is Temperature-sensitive sn-2 acyl-lipid omega-3 desaturase (ferredoxin), chloroplastic.